We begin with the raw amino-acid sequence, 212 residues long: Large ribosomal subunit protein uL1 (212 aa).

It belongs to the universal ribosomal protein uL1 family. In terms of assembly, part of the 50S ribosomal subunit.

Its function is as follows. Binds directly to 23S rRNA. Probably involved in E site tRNA release. Functionally, protein L1 is also a translational repressor protein, it controls the translation of its operon by binding to its mRNA. The chain is Large ribosomal subunit protein uL1 from Methanosphaera stadtmanae (strain ATCC 43021 / DSM 3091 / JCM 11832 / MCB-3).